The sequence spans 193 residues: Anthranilate synthase component 2 (193 aa).

The Glutamine amidotransferase type-1 domain maps to Asn3–Arg193. Residue Gly57–Gly59 participates in L-glutamine binding. Catalysis depends on Cys84, which acts as the Nucleophile; for GATase activity. L-glutamine is bound by residues Gln88 and Ser134–Leu135. Residues His170 and Glu172 each act as for GATase activity in the active site.

In terms of assembly, heterotetramer consisting of two non-identical subunits: a beta subunit (TrpG) and a large alpha subunit (TrpE).

It carries out the reaction chorismate + L-glutamine = anthranilate + pyruvate + L-glutamate + H(+). It participates in amino-acid biosynthesis; L-tryptophan biosynthesis; L-tryptophan from chorismate: step 1/5. Functionally, part of a heterotetrameric complex that catalyzes the two-step biosynthesis of anthranilate, an intermediate in the biosynthesis of L-tryptophan. In the first step, the glutamine-binding beta subunit (TrpG) of anthranilate synthase (AS) provides the glutamine amidotransferase activity which generates ammonia as a substrate that, along with chorismate, is used in the second step, catalyzed by the large alpha subunit of AS (TrpE) to produce anthranilate. In the absence of TrpG, TrpE can synthesize anthranilate directly from chorismate and high concentrations of ammonia. The protein is Anthranilate synthase component 2 (trpG) of Haemophilus influenzae (strain ATCC 51907 / DSM 11121 / KW20 / Rd).